The following is a 500-amino-acid chain: L-arabinose isomerase (500 aa).

Mn(2+) contacts are provided by Glu-306, Glu-333, His-350, and His-450.

Belongs to the arabinose isomerase family. Homohexamer. Mn(2+) is required as a cofactor.

It carries out the reaction beta-L-arabinopyranose = L-ribulose. It participates in carbohydrate degradation; L-arabinose degradation via L-ribulose; D-xylulose 5-phosphate from L-arabinose (bacterial route): step 1/3. Functionally, catalyzes the conversion of L-arabinose to L-ribulose. The polypeptide is L-arabinose isomerase (Yersinia pestis bv. Antiqua (strain Nepal516)).